The following is a 190-amino-acid chain: UPF0200 protein OE_4442F (190 aa).

ATP is bound at residue 8 to 15; it reads GMPGSGKS. The tract at residues 120 to 144 is disordered; sequence ARIEDRDRPGDTDGEPLDAREDRER.

It belongs to the UPF0200 family.

The chain is UPF0200 protein OE_4442F from Halobacterium salinarum (strain ATCC 29341 / DSM 671 / R1).